A 417-amino-acid polypeptide reads, in one-letter code: Imidazolonepropionase (417 aa).

Residues His80 and His82 each contribute to the Fe(3+) site. His80 and His82 together coordinate Zn(2+). 4-imidazolone-5-propanoate contacts are provided by Arg89, Tyr152, and His187. Tyr152 contributes to the N-formimidoyl-L-glutamate binding site. Residue His252 participates in Fe(3+) binding. Zn(2+) is bound at residue His252. Glu255 contributes to the 4-imidazolone-5-propanoate binding site. Asp326 serves as a coordination point for Fe(3+). A Zn(2+)-binding site is contributed by Asp326. The N-formimidoyl-L-glutamate site is built by Asn328 and Gly330. Position 331 (Ser331) interacts with 4-imidazolone-5-propanoate.

It belongs to the metallo-dependent hydrolases superfamily. HutI family. Zn(2+) serves as cofactor. Requires Fe(3+) as cofactor.

The protein resides in the cytoplasm. The catalysed reaction is 4-imidazolone-5-propanoate + H2O = N-formimidoyl-L-glutamate. It participates in amino-acid degradation; L-histidine degradation into L-glutamate; N-formimidoyl-L-glutamate from L-histidine: step 3/3. Its function is as follows. Catalyzes the hydrolytic cleavage of the carbon-nitrogen bond in imidazolone-5-propanoate to yield N-formimidoyl-L-glutamate. It is the third step in the universal histidine degradation pathway. The polypeptide is Imidazolonepropionase (Bacteroides fragilis (strain YCH46)).